The primary structure comprises 437 residues: Protein WVD2-like 5 (437 aa).

Disordered stretches follow at residues 1-22 (MDPE…GGLA), 38-210 (TVDT…FSFK), and 254-437 (LRKS…AVEH). Over residues 41–55 (TTSESQNENSANSST) the composition is skewed to low complexity. Positions 58 to 86 (TIEHVKEAAEGTQVEHVDDSKCMKGEKAQ) are enriched in basic and acidic residues. A compositionally biased stretch (polar residues) spans 121–140 (SNGSVAPNVQTTNPLKSKSF). Residues 151–167 (GKHDSAPAESADGEKVK) are compositionally biased toward basic and acidic residues. S208 bears the Phosphoserine mark. A compositionally biased stretch (basic residues) spans 288–297 (KSPKLGRKKT). Low complexity predominate over residues 360-371 (PAPAKAAIIPAK). Over residues 408–437 (EDSHETVSPRMNEDRADKSIEVSEAVAVEH) the composition is skewed to basic and acidic residues. S415 carries the phosphoserine modification.

It belongs to the TPX2 family. Expressed in seedlings.

Its subcellular location is the cytoplasm. The protein localises to the cytoskeleton. Microtubule-associated protein (MAP) that regulates the orientation of interphase cortical microtubules. This is Protein WVD2-like 5 from Arabidopsis thaliana (Mouse-ear cress).